The chain runs to 334 residues: Anthranilate phosphoribosyltransferase (334 aa).

5-phospho-alpha-D-ribose 1-diphosphate contacts are provided by residues Gly79, 82–83 (GD), Ser87, 89–92 (NIST), 107–115 (KAGNRSISS), and Ser119. Position 79 (Gly79) interacts with anthranilate. Ser91 is a binding site for Mg(2+). Residue Asn110 coordinates anthranilate. Position 165 (Arg165) interacts with anthranilate. The Mg(2+) site is built by Asp224 and Glu225.

Belongs to the anthranilate phosphoribosyltransferase family. As to quaternary structure, homodimer. The cofactor is Mg(2+).

It catalyses the reaction N-(5-phospho-beta-D-ribosyl)anthranilate + diphosphate = 5-phospho-alpha-D-ribose 1-diphosphate + anthranilate. It participates in amino-acid biosynthesis; L-tryptophan biosynthesis; L-tryptophan from chorismate: step 2/5. Catalyzes the transfer of the phosphoribosyl group of 5-phosphorylribose-1-pyrophosphate (PRPP) to anthranilate to yield N-(5'-phosphoribosyl)-anthranilate (PRA). The polypeptide is Anthranilate phosphoribosyltransferase (Streptococcus thermophilus (strain CNRZ 1066)).